The chain runs to 105 residues: Cell division protein FtsB (105 aa).

The Cytoplasmic portion of the chain corresponds to 1–3 (MGK). A helical membrane pass occupies residues 4–21 (LTLLLLALLVWLQYSLWF). Residues 22–105 (GKNGLHDYTR…QASGQQQNNR (84 aa)) are Periplasmic-facing. Residues 33–62 (NDDVTAQQATNAKLKARNDQLFAEIDDLNG) are a coiled coil.

Belongs to the FtsB family. As to quaternary structure, part of a complex composed of FtsB, FtsL and FtsQ.

It is found in the cell inner membrane. Essential cell division protein. May link together the upstream cell division proteins, which are predominantly cytoplasmic, with the downstream cell division proteins, which are predominantly periplasmic. The polypeptide is Cell division protein FtsB (Klebsiella aerogenes (Enterobacter aerogenes)).